Consider the following 417-residue polypeptide: RH-like protein IIR (417 aa).

The next 11 membrane-spanning stretches (helical) occupy residues 12 to 32 (CLPL…YFFT), 44 to 64 (LVAS…GFGF), 77 to 97 (VAFS…LDGF), 125 to 145 (ISVD…MVLV), 172 to 192 (IYVF…KPLP), 203 to 223 (TIPS…WPSF), 238 to 258 (VFNT…GSSL), 265 to 285 (ISMS…GTSC), 287 to 307 (LIPS…ISVG), 331 to 351 (NFSW…VRHT), and 358 to 378 (MIGF…TIAL).

This sequence belongs to the ammonium transporter (TC 2.A.49) family. Rh subfamily.

The protein localises to the membrane. May be part of an oligomeric complex which is likely to have a transport or channel function in the erythrocyte membrane. The polypeptide is RH-like protein IIR (Pan troglodytes (Chimpanzee)).